A 109-amino-acid chain; its full sequence is Nucleoid-associated protein Psyc_0793 (109 aa).

This sequence belongs to the YbaB/EbfC family. As to quaternary structure, homodimer.

It localises to the cytoplasm. The protein resides in the nucleoid. In terms of biological role, binds to DNA and alters its conformation. May be involved in regulation of gene expression, nucleoid organization and DNA protection. This chain is Nucleoid-associated protein Psyc_0793, found in Psychrobacter arcticus (strain DSM 17307 / VKM B-2377 / 273-4).